A 365-amino-acid polypeptide reads, in one-letter code: Keratin-associated protein 10-6 (365 aa).

Tandem repeats lie at residues 41–45 (CCEPP), 46–50 (CCAPA), 67–71 (CCPVT), 89–93 (CCQQS), 99–103 (CCASS), 109–113 (CCVPV), 114–118 (CCKTV), 119–123 (CCKPV), 124–128 (CCVSV), 129–133 (CCGDS), 135–139 (CCQQS), 145–149 (CCTSS), 155–159 (CCVPV), 160–164 (CCKPV), 172–176 (CCQQS), 186–190 (CCQAV), 208–212 (CCQQS), 218–222 (CCTSS), 228–232 (CCVPV), 233–237 (CCVPV), 238–242 (CCVPT), 250–254 (CCQQS), 260–264 (CCTSS), 270–274 (CCVPV), 282–286 (CCQQS), 292–296 (CCTAS), 297–301 (CCRSS), 316–320 (CCVPV), and 334–338 (CCRTA). The tract at residues 41–338 (CCEPPCCAPA…SCQPSCCRTA (298 aa)) is 29 X 5 AA repeats of C-C-X(3).

Belongs to the KRTAP type 10 family. In terms of assembly, interacts with hair keratins. As to expression, restricted to a narrow region of the hair fiber cuticle, lying approximately 20 cell layers above the apex of the dermal papilla of the hair root; not detected in any other tissues.

Its function is as follows. In the hair cortex, hair keratin intermediate filaments are embedded in an interfilamentous matrix, consisting of hair keratin-associated proteins (KRTAP), which are essential for the formation of a rigid and resistant hair shaft through their extensive disulfide bond cross-linking with abundant cysteine residues of hair keratins. The matrix proteins include the high-sulfur and high-glycine-tyrosine keratins. In Homo sapiens (Human), this protein is Keratin-associated protein 10-6 (KRTAP10-6).